We begin with the raw amino-acid sequence, 275 residues long: NH(3)-dependent NAD(+) synthetase (275 aa).

ATP is bound at residue 46-53 (GISGGQDS). Asp-52 contacts Mg(2+). Arg-140 contacts deamido-NAD(+). Thr-160 contributes to the ATP binding site. Glu-165 contacts Mg(2+). Deamido-NAD(+) is bound by residues Lys-173 and Asp-180. Residues Lys-189 and Thr-211 each contribute to the ATP site. Deamido-NAD(+) is bound at residue 260–261 (HK).

It belongs to the NAD synthetase family. Homodimer.

It catalyses the reaction deamido-NAD(+) + NH4(+) + ATP = AMP + diphosphate + NAD(+) + H(+). It functions in the pathway cofactor biosynthesis; NAD(+) biosynthesis; NAD(+) from deamido-NAD(+) (ammonia route): step 1/1. Its function is as follows. Catalyzes the ATP-dependent amidation of deamido-NAD to form NAD. Uses ammonia as a nitrogen source. The sequence is that of NH(3)-dependent NAD(+) synthetase from Erwinia tasmaniensis (strain DSM 17950 / CFBP 7177 / CIP 109463 / NCPPB 4357 / Et1/99).